Here is a 75-residue protein sequence, read N- to C-terminus: Small ribosomal subunit protein bS18 (75 aa).

It belongs to the bacterial ribosomal protein bS18 family. As to quaternary structure, part of the 30S ribosomal subunit. Forms a tight heterodimer with protein bS6.

Binds as a heterodimer with protein bS6 to the central domain of the 16S rRNA, where it helps stabilize the platform of the 30S subunit. This is Small ribosomal subunit protein bS18 from Histophilus somni (strain 129Pt) (Haemophilus somnus).